The following is a 455-amino-acid chain: Beta-glucosidase A (455 aa).

E165 functions as the Proton donor in the catalytic mechanism. Catalysis depends on E363, which acts as the Nucleophile.

Belongs to the glycosyl hydrolase 1 family.

It catalyses the reaction Hydrolysis of terminal, non-reducing beta-D-glucosyl residues with release of beta-D-glucose.. This chain is Beta-glucosidase A (bglA), found in Caldicellulosiruptor saccharolyticus (Caldocellum saccharolyticum).